Consider the following 471-residue polypeptide: UTP--glucose-1-phosphate uridylyltransferase (471 aa).

Residues 87–90 (LNGG), Lys101, Gln164, and Gly193 each bind UTP. 89–90 (GG) provides a ligand contact to substrate. Substrate is bound by residues His194 and 222–224 (NSD). The UTP site is built by Asp224 and Lys362.

Belongs to the UDPGP type 1 family.

Its subcellular location is the cytoplasm. It catalyses the reaction alpha-D-glucose 1-phosphate + UTP + H(+) = UDP-alpha-D-glucose + diphosphate. Its function is as follows. Plays a central role as a glucosyl donor in cellular metabolic pathways. The polypeptide is UTP--glucose-1-phosphate uridylyltransferase (Pyrus pyrifolia (Chinese pear)).